The sequence spans 219 residues: DnaJ homolog subfamily C member 30, mitochondrial (219 aa).

The transit peptide at Met-1–Tyr-38 directs the protein to the mitochondrion. The J domain occupies Ala-42–Leu-107. A disordered region spans residues Ser-109–Pro-148. Residues Asp-127–Pro-138 are compositionally biased toward pro residues. Residues Ala-202–Arg-218 form a helical membrane-spanning segment.

As to quaternary structure, associates with the ATP synthase complex. Interacts with MT-ATP6; interaction is direct. Interacts with ATP5MC2; interaction is direct. In terms of tissue distribution, in brain, expressed in gray matter structures.

It localises to the mitochondrion inner membrane. In terms of biological role, mitochondrial protein enriched in neurons that acts as a regulator of mitochondrial respiration. Associates with the ATP synthase complex and facilitates ATP synthesis. May be a chaperone protein involved in the turnover of the subunits of mitochondrial complex I N-module. It facilitates the degradation of N-module subunits damaged by oxidative stress, and contributes to complex I functional efficiency. This is DnaJ homolog subfamily C member 30, mitochondrial from Mus musculus (Mouse).